Here is a 299-residue protein sequence, read N- to C-terminus: KATNB1-like protein 1 (299 aa).

The Nuclear localization signal signature appears at 8-15 (VKKRNFSN). Phosphoserine is present on serine 56.

As to quaternary structure, interacts with KATNA1 and KATNAL1; these interactions are competed by KATNB1 which has a higher affinity for them.

It localises to the nucleus. Its subcellular location is the cytoplasm. The protein resides in the cytoskeleton. It is found in the spindle pole. Regulates microtubule-severing activity of KATNAL1 in a concentration-dependent manner in vitro. This is KATNB1-like protein 1 (Katnbl1) from Mus musculus (Mouse).